A 176-amino-acid polypeptide reads, in one-letter code: Cytochrome b (176 aa).

A run of 3 helical transmembrane segments spans residues 33 to 53, 77 to 98, and 113 to 133; these read FGSL…FLAM, WLLR…YLHV, and WNVG…GYVL. Residues His-83 and His-97 each contribute to the heme b site.

The protein belongs to the cytochrome b family. As to quaternary structure, the cytochrome bc1 complex contains 11 subunits: 3 respiratory subunits (MT-CYB, CYC1 and UQCRFS1), 2 core proteins (UQCRC1 and UQCRC2) and 6 low-molecular weight proteins (UQCRH/QCR6, UQCRB/QCR7, UQCRQ/QCR8, UQCR10/QCR9, UQCR11/QCR10 and a cleavage product of UQCRFS1). This cytochrome bc1 complex then forms a dimer. Heme b is required as a cofactor.

The protein resides in the mitochondrion inner membrane. In terms of biological role, component of the ubiquinol-cytochrome c reductase complex (complex III or cytochrome b-c1 complex) that is part of the mitochondrial respiratory chain. The b-c1 complex mediates electron transfer from ubiquinol to cytochrome c. Contributes to the generation of a proton gradient across the mitochondrial membrane that is then used for ATP synthesis. The sequence is that of Cytochrome b (MT-CYB) from Tadarida brasiliensis (Brazilian free-tailed bat).